Reading from the N-terminus, the 890-residue chain is Calcium-transporting ATPase (890 aa).

The Cytoplasmic portion of the chain corresponds to 1-47 (MKFHEMGQTDLLEATNTSMKQGLTEKEVKKRLDKHGPNELQEGKKTS). The chain crosses the membrane as a helical span at residues 48–68 (ALLLFFAQFKDFMVLVLLAAT). The Extracellular portion of the chain corresponds to 69-78 (LISGFLGEYV). The chain crosses the membrane as a helical span at residues 79–99 (DAVAIIAIVFVNGILGFFQER). Topologically, residues 100 to 238 (RAEQSLQALK…TLSTPLQRRL (139 aa)) are cytoplasmic. Residues 239–258 (EQLGKILIVVALLLTVLVVA) form a helical membrane-spanning segment. The Extracellular segment spans residues 259–270 (VGVIQGHDLYSM). A helical transmembrane segment spans residues 271–288 (FLAGVSLAVAAIPEGLPA). V279, A280, I282, and E284 together coordinate Ca(2+). Residues 289 to 688 (IVTVALSLGV…KEGRNIYENI (400 aa)) are Cytoplasmic-facing. The active-site 4-aspartylphosphate intermediate is D326. 2 residues coordinate Mg(2+): D633 and D637. A helical transmembrane segment spans residues 689–708 (RKFIRYLLASNVGEILVMLF). The Ca(2+) site is built by N699 and E702. Over 709 to 718 (AMLLALPLPL) the chain is Extracellular. A helical transmembrane segment spans residues 719-739 (VPIQILWVNLVTDGLPAMALG). The Ca(2+) site is built by N727, T730, and D731. Topologically, residues 740–759 (MDQPEGDVMKRKPRHPKEGV) are cytoplasmic. Residues 760–782 (FARKLGWKVVSRGFLIGVATILA) form a helical membrane-spanning segment. Residues 783 to 798 (FIIVYHRNPENLAYAQ) are Extracellular-facing. The helical transmembrane segment at 799–818 (TIAFATLVLAQLIHVFDCRS) threads the bilayer. The Cytoplasmic segment spans residues 819–830 (ETSVFSRNPFQN). A helical membrane pass occupies residues 831–849 (LYLIGAVLSSILLMLVVIY). Residues 850–864 (YPPLQPIFHTVAITP) lie on the Extracellular side of the membrane. Residues 865-885 (GDWMLVIGMSAIPTFLLAGSL) traverse the membrane as a helical segment. Topologically, residues 886–890 (LTRKK) are cytoplasmic.

This sequence belongs to the cation transport ATPase (P-type) (TC 3.A.3) family. Type IIA subfamily. Post-translationally, phosphorylated in a Ca(2+)-dependent manner starting 4 hours after shifting to sporulation medium.

The protein resides in the cell membrane. It catalyses the reaction Ca(2+)(in) + ATP + H2O = Ca(2+)(out) + ADP + phosphate + H(+). In terms of biological role, this magnesium-dependent enzyme catalyzes the hydrolysis of ATP coupled with the transport of calcium. The polypeptide is Calcium-transporting ATPase (yloB) (Bacillus subtilis (strain 168)).